Here is a 441-residue protein sequence, read N- to C-terminus: uncharacterized protein (441 aa).

Residue 78-85 participates in ATP binding; the sequence is GPRQAGKT.

This is an uncharacterized protein from Mycobacterium bovis (strain ATCC BAA-935 / AF2122/97).